A 356-amino-acid chain; its full sequence is Glycerophosphodiester phosphodiesterase (356 aa).

Positions 1-20 (MRGTYCVTLWGGVFAALVAG) are cleaved as a signal peptide. A lipid anchor (N-palmitoyl cysteine) is attached at Cys-21. A lipid anchor (S-diacylglycerol cysteine) is attached at Cys-21. The GP-PDE domain occupies 25–314 (RMIVAYRGAA…CHVHTVRKET (290 aa)).

This sequence belongs to the glycerophosphoryl diester phosphodiesterase family. Palmitoylated upon expression of a fusion protein with first 40 residues fused to PhoA in E.coli.

It localises to the cell inner membrane. It carries out the reaction a sn-glycero-3-phosphodiester + H2O = an alcohol + sn-glycerol 3-phosphate + H(+). Glycerophosphoryl diester phosphodiesterase hydrolyzes deacylated phospholipids to G3P and the corresponding alcohols. Its function is as follows. Binds human IgA, IgD and the Fc portion of IgG but not IgM, which may contribute to evasion of the human immune system. The protein is Glycerophosphodiester phosphodiesterase (glpQ) of Treponema pallidum (strain Nichols).